The chain runs to 121 residues: MSEHRQALGRYGEELAVKHIRQAGLTVLECNYRCPLGEMDIIAQEGETIIFIEVRTRSTGSRGWGEESITAKKRERLYRIATHYLKFRNYKEWPSLRFDLIAIRCQNQEGKQPDIIWIRGI.

It belongs to the UPF0102 family.

The polypeptide is UPF0102 protein Dhaf_3740 (Desulfitobacterium hafniense (strain DSM 10664 / DCB-2)).